The sequence spans 482 residues: 6-phosphogluconate dehydrogenase, decarboxylating (482 aa).

NADP(+)-binding positions include 17–22 (GLAVMG), 40–42 (NRS), 82–84 (VKA), and Asn110. Substrate contacts are provided by residues Asn110 and 136–138 (SGG). The active-site Proton acceptor is the Lys193. 196–197 (HN) provides a ligand contact to substrate. Glu200 (proton donor) is an active-site residue. Positions 201, 272, 299, 457, and 463 each coordinate substrate.

Belongs to the 6-phosphogluconate dehydrogenase family. Homodimer.

The enzyme catalyses 6-phospho-D-gluconate + NADP(+) = D-ribulose 5-phosphate + CO2 + NADPH. It participates in carbohydrate degradation; pentose phosphate pathway; D-ribulose 5-phosphate from D-glucose 6-phosphate (oxidative stage): step 3/3. Catalyzes the oxidative decarboxylation of 6-phosphogluconate to ribulose 5-phosphate and CO(2), with concomitant reduction of NADP to NADPH. In Synechocystis sp. (strain ATCC 27184 / PCC 6803 / Kazusa), this protein is 6-phosphogluconate dehydrogenase, decarboxylating (gnd).